The primary structure comprises 459 residues: Type I restriction enzyme HindI specificity subunit (459 aa).

This sequence belongs to the type-I restriction system S methylase family. In terms of assembly, the type I restriction/modification system is composed of three polypeptides R, M and S; the restriction enzyme has stoichiometry R(2)M(2)S(1) while the methyltransferase is M(2)S(1).

Its function is as follows. The specificity (S) subunit of a type I restriction enzyme; this subunit dictates DNA sequence specificity. The M and S subunits together form a methyltransferase (MTase) that methylates adenosines in the sequence 5'-RAACN(5)TAG-3'. Methylation protects against cleavage by HindI. In the presence of the R subunit the complex can also act as an endonuclease, binding to the same target sequence but cutting the DNA some distance from this site. Whether the DNA is cut or modified depends on the methylation state of the target sequence. When the target site is unmodified, the DNA is cut. When the target site is hemimethylated, the complex acts as a maintenance MTase modifying the DNA so that both strands become methylated. After locating a non-methylated recognition site, the enzyme complex serves as a molecular motor that translocates DNA in an ATP-dependent manner until a collision occurs that triggers cleavage. The sequence is that of Type I restriction enzyme HindI specificity subunit from Haemophilus influenzae (strain ATCC 51907 / DSM 11121 / KW20 / Rd).